Reading from the N-terminus, the 382-residue chain is Prostaglandin D2 receptor 2 (382 aa).

Over 1–32 the chain is Extracellular; the sequence is MANVTLKPLCPLLEEMVQLPNHSNSSLRYIDH. 3 N-linked (GlcNAc...) asparagine glycosylation sites follow: Asn3, Asn21, and Asn24. A helical transmembrane segment spans residues 33-55; that stretch reads VSVLLHGLASLLGLVENGLILFV. The Cytoplasmic segment spans residues 56 to 66; that stretch reads VGCRMRQTVVT. The helical transmembrane segment at 67 to 88 threads the bilayer; that stretch reads TWVLHLALSDLLAAASLPFFTY. The Extracellular segment spans residues 89-105; sequence FLAVGHSWELGTTFCKL. Cys103 and Cys181 form a disulfide bridge. Residues 106–126 traverse the membrane as a helical segment; the sequence is HSSVFFLNMFASGFLLSAISL. The Cytoplasmic portion of the chain corresponds to 127–145; it reads DRCLQVVRPVWAQNHRTVA. The helical transmembrane segment at 146–167 threads the bilayer; sequence VAHRVCLMLWALAVLNTIPYFV. At 168 to 209 the chain is on the extracellular side; sequence FRDTIPRLDGRIMCYYNLLLWNPGPDRDTTCDYRQKALAVSK. Residues 210 to 230 traverse the membrane as a helical segment; that stretch reads FLLAFMVPLAIIASSHVAVSL. Residues 231 to 246 are Cytoplasmic-facing; that stretch reads RLHHRGRQRTGRFVRL. Residues 247 to 268 traverse the membrane as a helical segment; the sequence is VAAIVVAFVLCWGPYHIFSLLE. The Extracellular segment spans residues 269-287; that stretch reads ARAHSVTTLRQLASRGLPF. A helical transmembrane segment spans residues 288–307; sequence VTSLAFFNSVVNPLLYVFTC. Residues 308–357 lie on the Cytoplasmic side of the membrane; that stretch reads PDMLYKLRRSLRAVLESVLVEDSDQSGGLRNRRRRASSTATPASTLLLAD. An Involved in the recycling of CRTH2 motif is present at residues 329 to 332; sequence DSDQ. Phosphoserine occurs at positions 330 and 344.

The protein belongs to the G-protein coupled receptor 1 family. In terms of processing, phosphorylated.

Its subcellular location is the cell membrane. Functionally, receptor for prostaglandin D2 (PGD2). Coupled to the G(i)-protein. Receptor activation may result in pertussis toxin-sensitive decreases in cAMP levels and Ca(2+) mobilization. PI3K signaling is also implicated in mediating PTGDR2 effects. PGD2 induced receptor internalization. CRTH2 internalization can be regulated by diverse kinases such as, PKC, PKA, GRK2, GPRK5/GRK5 and GRK6. Receptor activation is responsible, at least in part, in immune regulation and allergic/inflammation responses. The sequence is that of Prostaglandin D2 receptor 2 (Ptgdr2) from Mus musculus (Mouse).